The primary structure comprises 335 residues: Transaldolase (335 aa).

Ser-2 carries the N-acetylserine modification. Lys-144 serves as the catalytic Schiff-base intermediate with substrate.

The protein belongs to the transaldolase family. Type 1 subfamily. As to quaternary structure, homodimer.

The catalysed reaction is D-sedoheptulose 7-phosphate + D-glyceraldehyde 3-phosphate = D-erythrose 4-phosphate + beta-D-fructose 6-phosphate. The protein operates within carbohydrate degradation; pentose phosphate pathway; D-glyceraldehyde 3-phosphate and beta-D-fructose 6-phosphate from D-ribose 5-phosphate and D-xylulose 5-phosphate (non-oxidative stage): step 2/3. Transaldolase is important for the balance of metabolites in the pentose-phosphate pathway. The sequence is that of Transaldolase (TAL1) from Saccharomyces cerevisiae (strain ATCC 204508 / S288c) (Baker's yeast).